The chain runs to 466 residues: Uronate isomerase (466 aa).

Belongs to the metallo-dependent hydrolases superfamily. Uronate isomerase family.

The enzyme catalyses D-glucuronate = D-fructuronate. It carries out the reaction aldehydo-D-galacturonate = keto-D-tagaturonate. It participates in carbohydrate metabolism; pentose and glucuronate interconversion. This chain is Uronate isomerase (uxaC), found in Brucella melitensis biotype 1 (strain ATCC 23456 / CCUG 17765 / NCTC 10094 / 16M).